The sequence spans 88 residues: DNA-directed RNA polymerase subunit omega (88 aa).

This sequence belongs to the RNA polymerase subunit omega family. In terms of assembly, the RNAP catalytic core consists of 2 alpha, 1 beta, 1 beta' and 1 omega subunit. When a sigma factor is associated with the core the holoenzyme is formed, which can initiate transcription.

The catalysed reaction is RNA(n) + a ribonucleoside 5'-triphosphate = RNA(n+1) + diphosphate. Functionally, promotes RNA polymerase assembly. Latches the N- and C-terminal regions of the beta' subunit thereby facilitating its interaction with the beta and alpha subunits. This Salinispora arenicola (strain CNS-205) protein is DNA-directed RNA polymerase subunit omega.